A 388-amino-acid polypeptide reads, in one-letter code: Alpha-2A adrenergic receptor (388 aa).

The Extracellular portion of the chain corresponds to 1-22 (MICGANATNGTNATKEYTLLVA). Asn6, Asn9, and Asn12 each carry an N-linked (GlcNAc...) asparagine glycan. The helical transmembrane segment at 23 to 48 (LPLSIAVGLLILLIIFGNVLVIIAVF) threads the bilayer. The Cytoplasmic segment spans residues 49 to 59 (TSRALRAPQNL). A helical transmembrane segment spans residues 60 to 85 (FLVSLASADILVATLVMPFSLANELM). Topologically, residues 86–95 (GMWTFGGVWC) are extracellular. The cysteines at positions 95 and 169 are disulfide-linked. The chain crosses the membrane as a helical span at residues 96-118 (EIYLALDVLFCTASITHLCAISL). At 119 to 138 (DRYWSITQAIEYNLKRTPQR) the chain is on the cytoplasmic side. The helical transmembrane segment at 139–162 (IKRIIFIVWIIAAVISCPPLITMK) threads the bilayer. Residues 163-173 (KSEGDICDINK) are Extracellular-facing. A helical membrane pass occupies residues 174–198 (EKWYIVSSCIGSFFLPCIIMVLVYI). The Cytoplasmic segment spans residues 199 to 311 (RIYQIAKKRT…RQNREKRFTF (113 aa)). Positions 208–291 (TRAPPGDHRK…PGDGDKTEAC (84 aa)) are disordered. Positions 212–231 (PGDHRKNEVGKKENDPHEKL) are enriched in basic and acidic residues. Over residues 266-275 (LKKKSSKGKT) the composition is skewed to basic residues. A helical transmembrane segment spans residues 312–337 (VLAVVIGVFVICWFPFFFTYTFTAFC). Residues 338–344 (DCCVPET) lie on the Extracellular side of the membrane. A helical transmembrane segment spans residues 345–368 (LFKFFFWFGYCNSSLNPIIYTIFN). Residues 369-388 (NDFRRSFKKILCRRDKRRVV) are Cytoplasmic-facing. Cys380 carries the S-palmitoyl cysteine lipid modification.

This sequence belongs to the G-protein coupled receptor 1 family. Adrenergic receptor subfamily. ADRA2A sub-subfamily.

The protein resides in the cell membrane. In terms of biological role, alpha-2 adrenergic receptors mediate the catecholamine-induced inhibition of adenylate cyclase through the action of G proteins. The order of potency for this receptor is dexmedetomidine &gt; oxymetazoline = epinephrine &gt; norepinephrine. In Danio rerio (Zebrafish), this protein is Alpha-2A adrenergic receptor.